Reading from the N-terminus, the 348-residue chain is N6-Methyl-AMP deaminase (348 aa).

Residues histidine 18 and histidine 20 each contribute to the Zn(2+) site. N(6)-methyl-AMP is bound by residues histidine 20, asparagine 22, histidine 68, serine 100–arginine 103, aspartate 142, and glycine 175. Histidine 202 provides a ligand contact to Zn(2+). Residues glutamate 205, aspartate 287, and aspartate 288 each coordinate N(6)-methyl-AMP. The Proton donor role is filled by glutamate 205. Zn(2+) is bound at residue aspartate 287.

Belongs to the metallo-dependent hydrolases superfamily. Adenosine and AMP deaminases family. Monomer. Requires Zn(2+) as cofactor.

It catalyses the reaction N(6)-methyl-AMP + H2O + H(+) = IMP + methylamine. Catalyzes the hydrolysis of the free cytosolic methylated adenosine nucleotide N(6)-methyl-AMP (N6-mAMP) to produce inositol monophosphate (IMP) and methylamine. Is required for the catabolism of cytosolic N6-mAMP, which is derived from the degradation of mRNA containing N6-methylated adenine (m6A). This chain is N6-Methyl-AMP deaminase (mapda), found in Danio rerio (Zebrafish).